The following is a 548-amino-acid chain: Folylpolyglutamate synthase (548 aa).

An ATP-binding site is contributed by 130–133 (GKGS). Positions 157, 234, and 262 each coordinate Mg(2+). ATP-binding residues include Arg-382 and Asp-396.

It belongs to the folylpolyglutamate synthase family. It depends on a monovalent cation as a cofactor.

The protein localises to the mitochondrion inner membrane. Its subcellular location is the mitochondrion matrix. It is found in the cytoplasm. The catalysed reaction is (6S)-5,6,7,8-tetrahydrofolyl-(gamma-L-Glu)(n) + L-glutamate + ATP = (6S)-5,6,7,8-tetrahydrofolyl-(gamma-L-Glu)(n+1) + ADP + phosphate + H(+). The protein operates within cofactor biosynthesis; tetrahydrofolylpolyglutamate biosynthesis. Catalyzes conversion of folates to polyglutamate derivatives allowing concentration of folate compounds in the cell and the intracellular retention of these cofactors, which are important substrates for most of the folate-dependent enzymes that are involved in one-carbon transfer reactions involved in purine, pyrimidine and amino acid synthesis. Required for methionine synthesis and maintenance of intact mitochondrial DNA. Involved in telomere maintenance. In Saccharomyces cerevisiae (strain AWRI1631) (Baker's yeast), this protein is Folylpolyglutamate synthase.